We begin with the raw amino-acid sequence, 141 residues long: Large ribosomal subunit protein uL11 (141 aa).

This sequence belongs to the universal ribosomal protein uL11 family. In terms of assembly, part of the ribosomal stalk of the 50S ribosomal subunit. Interacts with L10 and the large rRNA to form the base of the stalk. L10 forms an elongated spine to which L12 dimers bind in a sequential fashion forming a multimeric L10(L12)X complex. One or more lysine residues are methylated.

Functionally, forms part of the ribosomal stalk which helps the ribosome interact with GTP-bound translation factors. In Chlorobium luteolum (strain DSM 273 / BCRC 81028 / 2530) (Pelodictyon luteolum), this protein is Large ribosomal subunit protein uL11.